The sequence spans 301 residues: Oxygen-dependent coproporphyrinogen-III oxidase (301 aa).

The interval 49–58 (VMVDGAVIEK) is important for dimerization. Ser93 provides a ligand contact to substrate. The Proton donor role is filled by His107. Substrate contacts are provided by residues 109–111 (NVR) and 259–261 (GGR). The interval 241-276 (YAEFNLVIDRGTKFGLQSGGRTESILISLPPRARWG) is important for dimerization.

The protein belongs to the aerobic coproporphyrinogen-III oxidase family. In terms of assembly, homodimer.

The protein localises to the cytoplasm. The enzyme catalyses coproporphyrinogen III + O2 + 2 H(+) = protoporphyrinogen IX + 2 CO2 + 2 H2O. Its pathway is porphyrin-containing compound metabolism; protoporphyrin-IX biosynthesis; protoporphyrinogen-IX from coproporphyrinogen-III (O2 route): step 1/1. Its function is as follows. Involved in the heme biosynthesis. Catalyzes the aerobic oxidative decarboxylation of propionate groups of rings A and B of coproporphyrinogen-III to yield the vinyl groups in protoporphyrinogen-IX. The chain is Oxygen-dependent coproporphyrinogen-III oxidase from Leishmania major.